The chain runs to 664 residues: Peroxisomal acyl-coenzyme A oxidase 1 (664 aa).

Positions 135, 137, 138, 144, 177, 310, 330, 333, 401, and 422 each coordinate FAD. The active-site Proton acceptor is the Glu424. Residue Asp426 coordinates FAD. An intrachain disulfide couples Cys467 to Cys576. The Microbody targeting signal signature appears at 662 to 664 (ARL).

This sequence belongs to the acyl-CoA oxidase family. As to quaternary structure, homodimer. FAD serves as cofactor. Expressed mainly in flowers and young seedlings. Lower expression in roots, leaves and bracts.

Its subcellular location is the peroxisome. The enzyme catalyses a 2,3-saturated acyl-CoA + O2 = a (2E)-enoyl-CoA + H2O2. In terms of biological role, catalyzes the desaturation of both long- and medium-chain acyl-CoAs to 2-trans-enoyl-CoAs. Most active with C14-CoA. Activity on long-chain mono-unsaturated substrates is 40% higher than with the corresponding saturated substrates. Seems to be an important factor in the general metabolism of root tips. May be involved in the biosynthesis of jasmonic acid. The protein is Peroxisomal acyl-coenzyme A oxidase 1 of Arabidopsis thaliana (Mouse-ear cress).